The sequence spans 72 residues: UPF0270 protein KPK_0377 (72 aa).

It belongs to the UPF0270 family.

The polypeptide is UPF0270 protein KPK_0377 (Klebsiella pneumoniae (strain 342)).